Here is a 214-residue protein sequence, read N- to C-terminus: Phosphatidylserine decarboxylase proenzyme (214 aa).

Residue S182 is the Schiff-base intermediate with substrate; via pyruvic acid of the active site. Residue S182 is modified to Pyruvic acid (Ser); by autocatalysis.

It belongs to the phosphatidylserine decarboxylase family. PSD-A subfamily. In terms of assembly, heterodimer of a large membrane-associated beta subunit and a small pyruvoyl-containing alpha subunit. Pyruvate is required as a cofactor. Post-translationally, is synthesized initially as an inactive proenzyme. Formation of the active enzyme involves a self-maturation process in which the active site pyruvoyl group is generated from an internal serine residue via an autocatalytic post-translational modification. Two non-identical subunits are generated from the proenzyme in this reaction, and the pyruvate is formed at the N-terminus of the alpha chain, which is derived from the carboxyl end of the proenzyme. The post-translation cleavage follows an unusual pathway, termed non-hydrolytic serinolysis, in which the side chain hydroxyl group of the serine supplies its oxygen atom to form the C-terminus of the beta chain, while the remainder of the serine residue undergoes an oxidative deamination to produce ammonia and the pyruvoyl prosthetic group on the alpha chain.

The protein resides in the cell membrane. It catalyses the reaction a 1,2-diacyl-sn-glycero-3-phospho-L-serine + H(+) = a 1,2-diacyl-sn-glycero-3-phosphoethanolamine + CO2. It functions in the pathway phospholipid metabolism; phosphatidylethanolamine biosynthesis; phosphatidylethanolamine from CDP-diacylglycerol: step 2/2. In terms of biological role, catalyzes the formation of phosphatidylethanolamine (PtdEtn) from phosphatidylserine (PtdSer). This chain is Phosphatidylserine decarboxylase proenzyme, found in Burkholderia ambifaria (strain MC40-6).